The chain runs to 96 residues: Progonadoliberin-1 (96 aa).

Residues 1–26 (MHRKMAVKTLSVWLLLVGTLVPQHCC) form the signal peptide. The residue at position 27 (Gln27) is a Pyrrolidone carboxylic acid. Gly36 bears the Glycine amide mark.

It belongs to the GnRH family. Preoptic area of the brain.

It localises to the secreted. Functionally, stimulates the secretion of gonadotropins. The polypeptide is Progonadoliberin-1 (gnrh1) (Verasper moseri (Barfin flounder)).